Consider the following 360-residue polypeptide: LETM1 domain-containing protein 1 (360 aa).

A required and sufficient for mitochondrial import region spans residues 1–110 (MALSRVCWAR…KKARRIKTNM (110 aa)). At 1–137 (MALSRVCWAR…LRQFRRDVTK (137 aa)) the chain is on the cytoplasmic side. The chain crosses the membrane as a helical span at residues 138-158 (CLFLGILSIPPFANYLVFLLM). The Mitochondrial intermembrane segment spans residues 159-360 (YLFPRQLLIR…LSINYVGSRR (202 aa)). The Letm1 RBD domain maps to 186–360 (LRKQSHPEIL…LSINYVGSRR (175 aa)).

As to quaternary structure, interacts with BRI3BP. Interacts (via C-terminal) with SMARCA4; the interaction regulates transcriptional expression of thermogenic genes in brown adipose tissue.

It is found in the mitochondrion outer membrane. The protein resides in the nucleus. It localises to the mitochondrion inner membrane. Its function is as follows. Plays an essential role for mitochondrial structure and function, as well as thermogenesis of brown adipocytes. In brown adipose tissue also localizes in the nucleus where it interacts with the chromatin remodeler SMARCA4 to regulate thermogenic genes expression, such as UCP1. May regulate phagocytosis and inflammatory responses to lipopolysaccharide in macrophages. Involved in tumorigenesis and may function as a negative regulator of the p53/TP53. This is LETM1 domain-containing protein 1 from Bos taurus (Bovine).